Reading from the N-terminus, the 309-residue chain is Taste receptor type 2 member 114 (309 aa).

At 1–7 the chain is on the extracellular side; the sequence is MLGAMEG. Residues 8–28 form a helical membrane-spanning segment; sequence VLLSVATSEALLGIVGNTFIA. At 29-43 the chain is on the cytoplasmic side; it reads LVNCMDCTRNKNLYN. A helical transmembrane segment spans residues 44 to 64; that stretch reads IGFILTGLAISRICLVWILIT. Over 65-87 the chain is Extracellular; sequence EAYIKIFSPQLLSPINIIELISY. The helical transmembrane segment at 88-108 threads the bilayer; it reads LWIITSQLNVWFATSLSIFYF. The Cytoplasmic portion of the chain corresponds to 109-127; the sequence is LKIANFSHHIFLWLKRRIN. The helical transmembrane segment at 128 to 148 threads the bilayer; sequence IVFAFLIGCLLMSWLFSFPVV. Residues 149–182 lie on the Extracellular side of the membrane; it reads VKMVKDKKMLYINSSWQIHMKKSELIINYVFTNG. Asn161 carries an N-linked (GlcNAc...) asparagine glycan. The chain crosses the membrane as a helical span at residues 183-203; that stretch reads GVFLLFIIMLIVCFLLIISLW. Over 204–233 the chain is Cytoplasmic; it reads RHSKWMQSNESGFRDLNTEVHVKTIKVLLS. The helical transmembrane segment at 234-254 threads the bilayer; that stretch reads FIILFILHLIGITINVICLLV. At 255-259 the chain is on the extracellular side; that stretch reads PENNL. A helical membrane pass occupies residues 260 to 280; the sequence is LFVFGLTIAFLYPCCHSLILI. Topologically, residues 281–309 are cytoplasmic; sequence LANSRLKRCFVRILQQLMCSEEGKEFRNT.

Belongs to the G-protein coupled receptor T2R family.

The protein resides in the membrane. Functionally, putative taste receptor which may play a role in the perception of bitterness. The sequence is that of Taste receptor type 2 member 114 from Rattus norvegicus (Rat).